A 340-amino-acid chain; its full sequence is Dihydroorotate dehydrogenase (quinone) (340 aa).

Residues 61–65 (AGLDK) and Thr-85 each bind FMN. Substrate is bound at residue Lys-65. Substrate is bound at residue 110–114 (NRMGF). Positions 138 and 171 each coordinate FMN. Asn-171 lines the substrate pocket. Catalysis depends on Ser-174, which acts as the Nucleophile. Asn-176 is a substrate binding site. The FMN site is built by Lys-216 and Thr-244. 245-246 (NT) contacts substrate. FMN contacts are provided by residues Gly-267, Gly-296, and 317 to 318 (YT).

It belongs to the dihydroorotate dehydrogenase family. Type 2 subfamily. In terms of assembly, monomer. FMN is required as a cofactor.

The protein localises to the cell membrane. The enzyme catalyses (S)-dihydroorotate + a quinone = orotate + a quinol. The protein operates within pyrimidine metabolism; UMP biosynthesis via de novo pathway; orotate from (S)-dihydroorotate (quinone route): step 1/1. Functionally, catalyzes the conversion of dihydroorotate to orotate with quinone as electron acceptor. This is Dihydroorotate dehydrogenase (quinone) from Marinobacter nauticus (strain ATCC 700491 / DSM 11845 / VT8) (Marinobacter aquaeolei).